Consider the following 308-residue polypeptide: Ribosomal RNA large subunit methyltransferase F (308 aa).

It belongs to the methyltransferase superfamily. METTL16/RlmF family.

The protein localises to the cytoplasm. The catalysed reaction is adenosine(1618) in 23S rRNA + S-adenosyl-L-methionine = N(6)-methyladenosine(1618) in 23S rRNA + S-adenosyl-L-homocysteine + H(+). In terms of biological role, specifically methylates the adenine in position 1618 of 23S rRNA. The sequence is that of Ribosomal RNA large subunit methyltransferase F from Shigella flexneri serotype 5b (strain 8401).